Reading from the N-terminus, the 266-residue chain is 2-Cys peroxiredoxin BAS1, chloroplastic (266 aa).

Residues 1-16 show a composition bias toward low complexity; sequence MASVASSTTLISSPSS. The interval 1–25 is disordered; the sequence is MASVASSTTLISSPSSRVFPAKSSL. Residues 1–65 constitute a chloroplast transit peptide; sequence MASVASSTTL…SSTSRRSFAV (65 aa). The 160-residue stretch at 73–232 folds into the Thioredoxin domain; that stretch reads PLVGNKAPDF…TMRTLQALQY (160 aa). Residue Cys119 is the Cysteine sulfenic acid (-SOH) intermediate of the active site.

Belongs to the peroxiredoxin family. AhpC/Prx1 subfamily. As to quaternary structure, homodimer; disulfide-linked, upon oxidation. Interacts with the plastidial thioredoxin CDSP32. Interacts with the plastidial NADPH-dependent thioredoxin reductase ANTR-C.

The protein localises to the plastid. Its subcellular location is the chloroplast. The catalysed reaction is a hydroperoxide + [thioredoxin]-dithiol = an alcohol + [thioredoxin]-disulfide + H2O. Thiol-specific peroxidase that catalyzes the reduction of hydrogen peroxide and organic hydroperoxides to water and alcohols, respectively. Plays a role in cell protection against oxidative stress by detoxifying peroxides. May be an antioxidant enzyme particularly in the developing shoot and photosynthesizing leaf. In Arabidopsis thaliana (Mouse-ear cress), this protein is 2-Cys peroxiredoxin BAS1, chloroplastic (BAS1).